The sequence spans 63 residues: Large ribosomal subunit protein uL29 (63 aa).

Belongs to the universal ribosomal protein uL29 family.

This chain is Large ribosomal subunit protein uL29, found in Haemophilus ducreyi (strain 35000HP / ATCC 700724).